We begin with the raw amino-acid sequence, 265 residues long: Glutamate racemase (265 aa).

Residues 9-10 and 41-42 contribute to the substrate site; these read DS and YG. Cys-72 acts as the Proton donor/acceptor in catalysis. A substrate-binding site is contributed by 73–74; sequence NT. Cys-183 acts as the Proton donor/acceptor in catalysis. A substrate-binding site is contributed by 184 to 185; that stretch reads TH.

It belongs to the aspartate/glutamate racemases family.

The enzyme catalyses L-glutamate = D-glutamate. It functions in the pathway cell wall biogenesis; peptidoglycan biosynthesis. Its function is as follows. Provides the (R)-glutamate required for cell wall biosynthesis. This is Glutamate racemase from Lysinibacillus sphaericus (strain C3-41).